The primary structure comprises 211 residues: Large ribosomal subunit protein uL3 (211 aa).

Q150 is subject to N5-methylglutamine.

The protein belongs to the universal ribosomal protein uL3 family. In terms of assembly, part of the 50S ribosomal subunit. Forms a cluster with proteins L14 and L19. Methylated by PrmB.

Functionally, one of the primary rRNA binding proteins, it binds directly near the 3'-end of the 23S rRNA, where it nucleates assembly of the 50S subunit. This is Large ribosomal subunit protein uL3 from Pseudomonas entomophila (strain L48).